A 213-amino-acid polypeptide reads, in one-letter code: GTP-binding protein YPTC4 (213 aa).

13–21 is a binding site for GTP; the sequence is GDTGVGKSC. Positions 35 to 43 match the Effector region motif; it reads HDLTIGVEF. Residues 61–65, 119–122, and 149–151 contribute to the GTP site; these read DTAGQ, NKCD, and SAR. A disordered region spans residues 194 to 213; sequence AGPQTVKPGEGGAAKSSSCC. 2 S-geranylgeranyl cysteine lipidation sites follow: C212 and C213.

This sequence belongs to the small GTPase superfamily. Rab family.

Its subcellular location is the cell membrane. Protein transport. Probably involved in vesicular traffic. The protein is GTP-binding protein YPTC4 (YPTC4) of Chlamydomonas reinhardtii (Chlamydomonas smithii).